Consider the following 367-residue polypeptide: MSTDFVFTPNFSTGFSCLKSDVVIHIAQWQYWWWFWFTYLWSLYFFFISRSIRARTFKMRPKIYTSFRSHGKWGDFLACIVPVIWCFNILVNSNFILRLMEWQNESTIFTSCIRARQWYWIYKFELKNILDLLTVPKKVGWNKWLIHTGNSIEVADDYFYALRIRAQNSWTSKYWKTFVRSLKKFKVSNNIHFIDDVVTAKKFKASVLSFMPYNQFDDKTLGFNLAKTNDSTVLLENDIFCDNFLFKGGDSWLCESIVFNHFGKKKIGGKKSDTLFNALNKTMFLNRKFFKNFLYDIDALVSNAFLEKKPKYVNLTTKRTDYGDFSRFTKKRVFEKRPILITKAFFPLNMEAFDNEILNVSFDATVT.

Its subcellular location is the mitochondrion. This is an uncharacterized protein from Paramecium tetraurelia.